The primary structure comprises 269 residues: Shikimate dehydrogenase (NADP(+)) (269 aa).

Shikimate-binding positions include 17-19 and Thr64; that span reads SKS. Lys68 acts as the Proton acceptor in catalysis. Glu80 provides a ligand contact to NADP(+). The shikimate site is built by Asn89 and Asp105. NADP(+) is bound by residues 130–134, 154–159, and Met213; these read GAGGA and NRTHAK. Shikimate is bound at residue Tyr215. Gly237 is an NADP(+) binding site.

This sequence belongs to the shikimate dehydrogenase family. As to quaternary structure, homodimer.

The enzyme catalyses shikimate + NADP(+) = 3-dehydroshikimate + NADPH + H(+). Its pathway is metabolic intermediate biosynthesis; chorismate biosynthesis; chorismate from D-erythrose 4-phosphate and phosphoenolpyruvate: step 4/7. Involved in the biosynthesis of the chorismate, which leads to the biosynthesis of aromatic amino acids. Catalyzes the reversible NADPH linked reduction of 3-dehydroshikimate (DHSA) to yield shikimate (SA). This Neisseria pharyngis protein is Shikimate dehydrogenase (NADP(+)).